The primary structure comprises 340 residues: MREPEFWRRRSLLSLLLMPLAALYGAIAASRMRKPGRSIAVPVICVGNYHGGGAGKTPTTLTLVALLRELDETPVVLSRGYGGSLNGPVEVDPDRHSAAEVGDEPLMMARSVPVVVAKDRVAGATLAMSRRASVIVMDDGFQNPALAKDVSLIVIDARRGIGNGRVIPSGPLRAPLPLQCERTDALLIIGAGSAADPVAARLKSKGVPTLRGHLAPDPACVEALRGRAVLAFAGIGDPERFFATLRASGIEVAAERPFPDHHPYSGDDVAALLDRARRDGLTLVTTEKDLARLGDQPQLAEAGLTALPVTLALEDEAGFRRFVIAQLGAARDRRFRGNRR.

Residue 50–57 (HGGGAGKT) coordinates ATP.

This sequence belongs to the LpxK family.

It catalyses the reaction a lipid A disaccharide + ATP = a lipid IVA + ADP + H(+). Its pathway is glycolipid biosynthesis; lipid IV(A) biosynthesis; lipid IV(A) from (3R)-3-hydroxytetradecanoyl-[acyl-carrier-protein] and UDP-N-acetyl-alpha-D-glucosamine: step 6/6. In terms of biological role, transfers the gamma-phosphate of ATP to the 4'-position of a tetraacyldisaccharide 1-phosphate intermediate (termed DS-1-P) to form tetraacyldisaccharide 1,4'-bis-phosphate (lipid IVA). This chain is Tetraacyldisaccharide 4'-kinase, found in Rhodopseudomonas palustris (strain BisA53).